The primary structure comprises 392 residues: Succinate--CoA ligase [ADP-forming] subunit beta (392 aa).

Positions 9–248 constitute an ATP-grasp domain; the sequence is KGILKQFGVA…ITEEDPLEYE (240 aa). ATP is bound by residues Lys-50, 57 to 59, Glu-103, Met-106, and Glu-111; that span reads GRG. The Mg(2+) site is built by Asn-203 and Asp-217. Substrate contacts are provided by residues Asn-268 and 325–327; that span reads GIV.

It belongs to the succinate/malate CoA ligase beta subunit family. As to quaternary structure, heterotetramer of two alpha and two beta subunits. It depends on Mg(2+) as a cofactor.

The enzyme catalyses succinate + ATP + CoA = succinyl-CoA + ADP + phosphate. It carries out the reaction GTP + succinate + CoA = succinyl-CoA + GDP + phosphate. The protein operates within carbohydrate metabolism; tricarboxylic acid cycle; succinate from succinyl-CoA (ligase route): step 1/1. Its function is as follows. Succinyl-CoA synthetase functions in the citric acid cycle (TCA), coupling the hydrolysis of succinyl-CoA to the synthesis of either ATP or GTP and thus represents the only step of substrate-level phosphorylation in the TCA. The beta subunit provides nucleotide specificity of the enzyme and binds the substrate succinate, while the binding sites for coenzyme A and phosphate are found in the alpha subunit. The protein is Succinate--CoA ligase [ADP-forming] subunit beta of Chlorobaculum parvum (strain DSM 263 / NCIMB 8327) (Chlorobium vibrioforme subsp. thiosulfatophilum).